The chain runs to 328 residues: MDVSLLLNVEGVKKTILHGGTGELPNFITGSRVTFHFRTMKCDEERTVIDDSKQVGQPMNIIIGNMFKLEVWETLLTSMRLGEVAEFWCDTIHTGVYPMLSRSLRQVAEGKDPTSWHVHTCGLANMFAYHTLGYEDLDELQKEPQPLIFLIELLQVEAPNEYQRETWNLNNEERMQAVPLLHGEGNRLYKLGRYDQAATKYQEAIVCLRNLQTKEKPWEVEWLKLEKMINTLILNYCQCLLKKEEYYEVLEHTSDILRHHPGIVKAYYMRARAHAEVWNAEEAKADLEKVLELEPSMRKAVLRELRLLESRLADKQEEERQRCRSMLG.

Positions 53-145 (KQVGQPMNII…DLDELQKEPQ (93 aa)) constitute a PPIase FKBP-type domain. 3 TPR repeats span residues 178–211 (VPLL…LRNL), 230–263 (NTLI…HPGI), and 264–297 (VKAY…EPSM).

In terms of assembly, interacts with NUB1. In terms of tissue distribution, highly expressed in retina.

The protein localises to the cytoplasm. It localises to the nucleus. Functionally, may be important in protein trafficking and/or protein folding and stabilization. The protein is Aryl-hydrocarbon-interacting protein-like 1 (Aipl1) of Rattus norvegicus (Rat).